The sequence spans 433 residues: Trigger factor (433 aa).

Residues 161-246 (EDRVVIDFVG…LKKVENIVLP (86 aa)) form the PPIase FKBP-type domain.

The protein belongs to the FKBP-type PPIase family. Tig subfamily.

It localises to the cytoplasm. The catalysed reaction is [protein]-peptidylproline (omega=180) = [protein]-peptidylproline (omega=0). Functionally, involved in protein export. Acts as a chaperone by maintaining the newly synthesized protein in an open conformation. Functions as a peptidyl-prolyl cis-trans isomerase. The chain is Trigger factor from Actinobacillus pleuropneumoniae serotype 7 (strain AP76).